The chain runs to 252 residues: Trans-aconitate 2-methyltransferase (252 aa).

This sequence belongs to the methyltransferase superfamily. Tam family.

Its subcellular location is the cytoplasm. It carries out the reaction trans-aconitate + S-adenosyl-L-methionine = (E)-3-(methoxycarbonyl)pent-2-enedioate + S-adenosyl-L-homocysteine. Functionally, catalyzes the S-adenosylmethionine monomethyl esterification of trans-aconitate. The chain is Trans-aconitate 2-methyltransferase from Escherichia coli O139:H28 (strain E24377A / ETEC).